Consider the following 280-residue polypeptide: Delta(3,5)-Delta(2,4)-dienoyl-CoA isomerase (280 aa).

E154 acts as the Proton donor/acceptor in catalysis. The Peroxisome targeting signal (PTS1) motif lies at 278-280 (HKL).

Belongs to the enoyl-CoA hydratase/isomerase family.

It is found in the cytoplasm. The protein localises to the cytosol. Its subcellular location is the peroxisome. It carries out the reaction a (3E,5Z)-dienoyl-CoA = a (2E,4E)-(5,6-saturated)-dienoyl-CoA. Its pathway is lipid metabolism; fatty acid beta-oxidation. Functionally, peroxisomal di-isomerase that is involved in fatty acid metabolism enzyme by converting 3,5-dienoyl-CoAs to the corresponding 2,4-dienoyl-CoAs. Involved in fatty acid beta-oxidation, which is important for lipid droplets degradation and infectious growth. The chain is Delta(3,5)-Delta(2,4)-dienoyl-CoA isomerase from Pyricularia oryzae (strain 70-15 / ATCC MYA-4617 / FGSC 8958) (Rice blast fungus).